The following is a 296-amino-acid chain: uncharacterized protein (296 aa).

6 consecutive transmembrane segments (helical) span residues methionine 1–tyrosine 21, leucine 30–leucine 50, phenylalanine 71–cysteine 91, leucine 92–alanine 112, isoleucine 113–phenylalanine 133, and isoleucine 142–cysteine 162.

This sequence belongs to the MscS (TC 1.A.23) family.

Its subcellular location is the cell membrane. This is an uncharacterized protein from Synechocystis sp. (strain ATCC 27184 / PCC 6803 / Kazusa).